Consider the following 1270-residue polypeptide: Breakpoint cluster region protein (1270 aa).

Residues 28-55 (VGDIEQELERCKASIRRLEQEVNQERFR) are a coiled coil. 4 disordered regions span residues 67-173 (KKSY…SADA), 201-249 (ISSL…DYED), 295-396 (KSPL…RHRQ), and 412-484 (TGQI…LEPT). A compositionally biased stretch (low complexity) spans 126–139 (GRPATARRPAAAAP). Phosphoserine is present on residues Ser-216 and Ser-237. Tyr-247 is subject to Phosphotyrosine. 2 stretches are compositionally biased toward low complexity: residues 348-358 (SSGQSSRVSPS) and 371-384 (SPSQNSQQSFDSSS). Phosphoserine is present on residues Ser-358, Ser-379, and Ser-384. The residue at position 387 (Thr-387) is a Phosphothreonine. A phosphoserine mark is found at Ser-461 and Ser-465. The residue at position 473 (Arg-473) is an Omega-N-methylarginine. A phosphoserine mark is found at Ser-475 and Ser-487. One can recognise a DH domain in the interval 497–690 (MRKWVLSGIL…QNFLSSINEE (194 aa)). Position 553 is a phosphotyrosine (Tyr-553). The residue at position 640 (Thr-640) is a Phosphothreonine. Tyr-643 carries the post-translational modification Phosphotyrosine. Thr-692 is modified (phosphothreonine). Residues 707–865 (QLLKDSFMVE…WRESIREQQK (159 aa)) form the PH domain. The C2 domain occupies 892–1019 (HHIPLTINKE…QDRDWQRTVI (128 aa)). The Rho-GAP domain maps to 1053–1247 (VKIAVVTKRE…VMSQVQVLLY (195 aa)). A Phosphoserine modification is found at Ser-1263.

As to quaternary structure, homotetramer. Interacts with PDZK1. May interact with CCPG1. Interacts with HCK, FES/FPS, ABL1, PIK3R1 and GRB2. Interacts with SH2D5. Interacts with DLG4. Autophosphorylated. Phosphorylated by FES/FPS on tyrosine residues, leading to down-regulation of the BCR kinase activity. Phosphorylation by HCK is important for interaction with GRB2. Expressed in brain, including the cortex, hippocampus, cerebellum, and brainstem, as well as the spinal cord (at protein level).

The protein localises to the postsynaptic density. It localises to the cell projection. The protein resides in the dendritic spine. It is found in the axon. Its subcellular location is the synapse. The enzyme catalyses L-seryl-[protein] + ATP = O-phospho-L-seryl-[protein] + ADP + H(+). It carries out the reaction L-threonyl-[protein] + ATP = O-phospho-L-threonyl-[protein] + ADP + H(+). Protein with a unique structure having two opposing regulatory activities toward small GTP-binding proteins. The C-terminus is a GTPase-activating protein (GAP) domain which stimulates GTP hydrolysis by RAC1, RAC2 and CDC42. Accelerates the intrinsic rate of GTP hydrolysis of RAC1 or CDC42, leading to down-regulation of the active GTP-bound form. The central Dbl homology (DH) domain functions as guanine nucleotide exchange factor (GEF) that modulates the GTPases CDC42, RHOA and RAC1. Promotes the conversion of CDC42, RHOA and RAC1 from the GDP-bound to the GTP-bound form. The amino terminus contains an intrinsic kinase activity. Functions as an important negative regulator of neuronal RAC1 activity. Regulates macrophage functions such as CSF1-directed motility and phagocytosis through the modulation of RAC1 activity. Plays a major role as a RHOA GEF in keratinocytes being involved in focal adhesion formation and keratinocyte differentiation. The protein is Breakpoint cluster region protein of Rattus norvegicus (Rat).